The following is a 187-amino-acid chain: Ion-translocating oxidoreductase complex subunit B (187 aa).

The segment at 1–26 is hydrophobic; the sequence is MTHILFAVLVLALLALAFGIILGFAA. The region spanning 32 to 90 is the 4Fe-4S domain; that stretch reads EADPIVDQLDALLPQTQCGQCGYPGCKPYAEALANGDQINKCVPGGDATMRKIADLMGV. [4Fe-4S] cluster contacts are provided by C49, C52, C57, C73, C115, C118, C121, C125, C145, C148, C151, and C155. 4Fe-4S ferredoxin-type domains follow at residues 106–135 and 136–165; these read KVAF…GATK and AMHT…MIPV.

This sequence belongs to the 4Fe4S bacterial-type ferredoxin family. RnfB subfamily. The complex is composed of six subunits: RnfA, RnfB, RnfC, RnfD, RnfE and RnfG. [4Fe-4S] cluster serves as cofactor.

Its subcellular location is the cell inner membrane. Functionally, part of a membrane-bound complex that couples electron transfer with translocation of ions across the membrane. The chain is Ion-translocating oxidoreductase complex subunit B from Aeromonas salmonicida (strain A449).